The primary structure comprises 478 residues: Dynein regulatory complex subunit 4 (478 aa).

The segment covering 1–12 has biased composition (basic residues); that stretch reads MAPKRRGKKGKA. Positions 1-32 are disordered; it reads MAPKRRGKKGKAKGNAVVDGVAPEDMSKEQVE. The tract at residues 1–114 is regulates microtubule-binding; sequence MAPKRRGKKG…LLYEHQNNLA (114 aa). Coiled-coil stretches lie at residues 24 to 201 and 243 to 427; these read EDMS…DELD and NNLA…LARV. Residues 115–258 form a microtubule-binding region; it reads EVKTEGTVVM…NSLKEQMEDM (144 aa). Positions 357 to 478 are interaction with SMO; that stretch reads QQKTGFKNLV…GPAGLVGAPT (122 aa).

It belongs to the DRC4 family. Component of the nexin-dynein regulatory complex (N-DRC). Interacts with microtubules. Interacts with SMO. Interacts (via coiled-coil domains) with RAB3B (in GTP-bound form). Interacts with DRC1. Interacts with DRC7.

The protein localises to the cytoplasm. Its subcellular location is the cytoskeleton. The protein resides in the cell projection. It is found in the cilium. It localises to the flagellum. The protein localises to the cilium axoneme. Its subcellular location is the cilium basal body. The protein resides in the golgi apparatus. It is found in the flagellum axoneme. Its function is as follows. Component of the nexin-dynein regulatory complex (N-DRC), a key regulator of ciliary/flagellar motility which maintains the alignment and integrity of the distal axoneme and regulates microtubule sliding in motile axonemes. Plays an important role in the assembly of the N-DRC linker. Plays dual roles at both the primary (or non-motile) cilia to regulate hedgehog signaling and in motile cilia to coordinate cilia movement. Required for proper motile cilia functioning. Positively regulates ciliary smoothened (SMO)-dependent Hedgehog (Hh) signaling pathway by facilitating the trafficking of SMO into the cilium and the stimulation of SMO activity in a GRK2-dependent manner. In Rattus norvegicus (Rat), this protein is Dynein regulatory complex subunit 4 (Gas8).